Consider the following 64-residue polypeptide: Small ribosomal subunit protein bS21 (64 aa).

The interval 39–64 is disordered; the sequence is EKPSVKRKKKALAAKKRAVKKARKSF. Basic residues predominate over residues 43–64; that stretch reads VKRKKKALAAKKRAVKKARKSF.

It belongs to the bacterial ribosomal protein bS21 family.

The protein is Small ribosomal subunit protein bS21 (rpsU) of Myxococcus xanthus.